Consider the following 1021-residue polypeptide: Ubiquitin-activating enzyme E1 1 (1021 aa).

ATP-binding residues include arginine 22, alanine 442, and aspartate 468. Residue aspartate 470 participates in Mg(2+) binding. Residues arginine 479, lysine 492, valine 518, and aspartate 542 to asparagine 543 each bind ATP. Mg(2+) is bound at residue aspartate 542. Catalysis depends on cysteine 598, which acts as the Glycyl thioester intermediate.

This sequence belongs to the ubiquitin-activating E1 family. Monomer.

The protein resides in the cytoplasm. Its subcellular location is the nucleus. It catalyses the reaction ATP + ubiquitin + [E1 ubiquitin-activating enzyme]-L-cysteine = AMP + diphosphate + S-ubiquitinyl-[E1 ubiquitin-activating enzyme]-L-cysteine.. It participates in protein modification; protein ubiquitination. E1 ubiquitin-activating enzyme that catalyzes the first step in ubiquitin conjugation to mark cellular proteins for degradation through the ubiquitin-proteasome system. Activates ubiquitin by first adenylating its C-terminal glycine residue with ATP, and thereafter linking this residue to the side chain of a cysteine residue in E1, yielding a ubiquitin-E1 thioester and free AMP. In Candida albicans (strain WO-1) (Yeast), this protein is Ubiquitin-activating enzyme E1 1 (UBA1).